The primary structure comprises 445 residues: Glutamyl-tRNA reductase (445 aa).

Substrate contacts are provided by residues Thr49–Arg52, Ser109, Glu114–Gln116, and Gln120. Cys50 acts as the Nucleophile in catalysis. Gly189–Ser194 is a binding site for NADP(+).

The protein belongs to the glutamyl-tRNA reductase family. Homodimer.

It carries out the reaction (S)-4-amino-5-oxopentanoate + tRNA(Glu) + NADP(+) = L-glutamyl-tRNA(Glu) + NADPH + H(+). Its pathway is porphyrin-containing compound metabolism; protoporphyrin-IX biosynthesis; 5-aminolevulinate from L-glutamyl-tRNA(Glu): step 1/2. Catalyzes the NADPH-dependent reduction of glutamyl-tRNA(Glu) to glutamate 1-semialdehyde (GSA). This Staphylococcus carnosus (strain TM300) protein is Glutamyl-tRNA reductase.